Here is a 312-residue protein sequence, read N- to C-terminus: Isochorismatase (312 aa).

Residues 229–302 (VFTCENIRKQ…EWQKLLTTRS (74 aa)) form the Carrier domain. An O-(pantetheine 4'-phosphoryl)serine modification is found at S263.

This sequence belongs to the isochorismatase family.

The catalysed reaction is isochorismate + H2O = (2S,3S)-2,3-dihydroxy-2,3-dihydrobenzoate + pyruvate. Its pathway is siderophore biosynthesis; bacillibactin biosynthesis. The protein is Isochorismatase (dhbB) of Bacillus subtilis (strain 168).